The sequence spans 109 residues: uncharacterized protein (109 aa).

3 helical membrane passes run 16–36, 54–74, and 80–100; these read YIPL…YYGL, TVYF…LLCL, and FCSS…TLAM.

The protein localises to the membrane. This is an uncharacterized protein from Schizosaccharomyces pombe (strain 972 / ATCC 24843) (Fission yeast).